The primary structure comprises 117 residues: Heat shock 70 kDa protein 1-like (117 aa).

Residues 72–75 (ERAK) and 84–87 (GSTR) each bind ATP.

Belongs to the heat shock protein 70 family. Interacts with PRKN. Detected at higher levels in caput epididymal spermatazoa than in cauda epididymal spermatazoa (at protein level).

Functionally, molecular chaperone implicated in a wide variety of cellular processes, including protection of the proteome from stress, folding and transport of newly synthesized polypeptides, activation of proteolysis of misfolded proteins and the formation and dissociation of protein complexes. Plays a pivotal role in the protein quality control system, ensuring the correct folding of proteins, the re-folding of misfolded proteins and controlling the targeting of proteins for subsequent degradation. This is achieved through cycles of ATP binding, ATP hydrolysis and ADP release, mediated by co-chaperones. The affinity for polypeptides is regulated by its nucleotide bound state. In the ATP-bound form, it has a low affinity for substrate proteins. However, upon hydrolysis of the ATP to ADP, it undergoes a conformational change that increases its affinity for substrate proteins. It goes through repeated cycles of ATP hydrolysis and nucleotide exchange, which permits cycles of substrate binding and release. Positive regulator of PRKN translocation to damaged mitochondria. The polypeptide is Heat shock 70 kDa protein 1-like (Mesocricetus auratus (Golden hamster)).